A 463-amino-acid polypeptide reads, in one-letter code: MISAISSPWLTQLSHFCDVAAFTANSLSSLNASGGYHLSPSPGDPYSQHEPHYEPCSASQHSYSFGHACPEPESGASSSSCASSTPGSGSTGSSGSSKAPVKKNPKVANITVQLEMKALWDEFNQLGTEMIVTKAGRRMFPTFQVKIFGMDPMADYMLLMDFVPVDDKRYRYAFHSSSWLVAGKADPATPGRVHYHPDSPAKGAQWMKQIVSFDKLKLTNNLLDDNGHIILNSMHRYQPRFHVVYVDPRKDSEKYAEENFKTFVFEETRFTAVTAYQNHRITQLKIASNPFAKGFRDCDPEDWPRNHRPGSLPLMNAFARSRNPVSSPPQNGSDKDGDGRREYERDTSGTPLHGDAAHQQLMSRVLSPSLPVPGGLVPLSTGRPSPPHELRLDPHSQGSEPLHHHPYKYPTSYDHYLGAKTRPAPYPLPSIRGHGYHHHPMNPAAANMYSGAGAPGSYEYGPR.

Disordered stretches follow at residues S39–A58 and G75–K103. Residues G75–S97 show a composition bias toward low complexity. A DNA-binding region (T-box) is located at residues L119–D297. 2 disordered regions span residues R320–G354 and S367–H405. The span at N323–G332 shows a compositional bias: polar residues. Residues S333–T347 show a composition bias toward basic and acidic residues. Residues S367–S380 are compositionally biased toward low complexity. The Nuclear localization signal signature appears at K420–I431.

In terms of assembly, binds DNA as a dimer. Interacts with dscr6/ripply3.

It localises to the nucleus. Its function is as follows. Probable transcriptional regulator involved in developmental processes. Binds to the palindromic T site 5'-TTCACACCTAGGTGTGAA-3' DNA sequence. Induces pre-placodal ectoderm (PPE) gene expression in regions where RIPPLY3 is absent. Plays a role in the formation of the anteroposterior (AP) axis during embryonic development; required to establish the posterolateral border of the pre-placodal ectoderm (PPE) acting downstream of the retinoic acid receptor (RAR) signaling. This Xenopus tropicalis (Western clawed frog) protein is T-box transcription factor TBX1 (tbx1).